The chain runs to 46 residues: Large ribosomal subunit protein bL34c (46 aa).

The disordered stretch occupies residues 1 to 46; that stretch reads MSKRTLEGSHRKKVRKSGFLSRSQSPTGRRILKARRKKGRKMLVKY. Positions 30–46 are enriched in basic residues; sequence RILKARRKKGRKMLVKY.

This sequence belongs to the bacterial ribosomal protein bL34 family.

Its subcellular location is the plastid. The protein resides in the cyanelle. The chain is Large ribosomal subunit protein bL34c (rpl34) from Cyanophora paradoxa.